The chain runs to 104 residues: N(4)-acetylcytidine amidohydrolase (104 aa).

Positions 6-94 constitute an ASCH domain; that stretch reads ITFFQRFQND…IAEIYPNQTQ (89 aa). Catalysis depends on lysine 21, which acts as the Proton acceptor. Catalysis depends on threonine 24, which acts as the Nucleophile. Glutamate 74 (proton donor) is an active-site residue.

It belongs to the N(4)-acetylcytidine amidohydrolase family.

The enzyme catalyses N(4)-acetylcytidine + H2O = cytidine + acetate + H(+). It carries out the reaction N(4)-acetyl-2'-deoxycytidine + H2O = 2'-deoxycytidine + acetate + H(+). It catalyses the reaction N(4)-acetylcytosine + H2O = cytosine + acetate + H(+). Its function is as follows. Catalyzes the hydrolysis of N(4)-acetylcytidine (ac4C). This is N(4)-acetylcytidine amidohydrolase (yqfB) from Salmonella dublin (strain CT_02021853).